The primary structure comprises 97 residues: Ice-structuring protein (97 aa).

The signal sequence occupies residues 1–23 (MALSLFTVGQLIFLFWTLRITEA). Residues 24-48 (NPDPAAKAAPAAVADPAAAAAAAVA) constitute a propeptide, removed by a dipeptidylpeptidase.

Belongs to the type-I AFP family. In terms of tissue distribution, detected in blood serum (at protein level).

It is found in the secreted. In terms of biological role, contributes to protect fish blood from freezing at subzero sea water temperatures. Lowers the blood freezing point. Binds to nascent ice crystals and prevents further growth. The chain is Ice-structuring protein from Myzopsetta ferruginea (Yellowtail flounder).